A 1390-amino-acid chain; its full sequence is DNA-directed RNA polymerase subunit beta (1390 aa).

This sequence belongs to the RNA polymerase beta chain family. As to quaternary structure, the RNAP catalytic core consists of 2 alpha, 1 beta, 1 beta' and 1 omega subunit. When a sigma factor is associated with the core the holoenzyme is formed, which can initiate transcription.

The enzyme catalyses RNA(n) + a ribonucleoside 5'-triphosphate = RNA(n+1) + diphosphate. Its function is as follows. DNA-dependent RNA polymerase catalyzes the transcription of DNA into RNA using the four ribonucleoside triphosphates as substrates. The polypeptide is DNA-directed RNA polymerase subunit beta (Gluconobacter oxydans (strain 621H) (Gluconobacter suboxydans)).